The following is a 259-amino-acid chain: Type III pantothenate kinase (259 aa).

Asp6–Val13 provides a ligand contact to ATP. Residue Gly107 to Arg110 participates in substrate binding. The active-site Proton acceptor is Asp109. Asp129 is a K(+) binding site. Residue Thr132 participates in ATP binding. Thr184 lines the substrate pocket.

This sequence belongs to the type III pantothenate kinase family. As to quaternary structure, homodimer. NH4(+) serves as cofactor. The cofactor is K(+).

It localises to the cytoplasm. The enzyme catalyses (R)-pantothenate + ATP = (R)-4'-phosphopantothenate + ADP + H(+). It participates in cofactor biosynthesis; coenzyme A biosynthesis; CoA from (R)-pantothenate: step 1/5. In terms of biological role, catalyzes the phosphorylation of pantothenate (Pan), the first step in CoA biosynthesis. In Thermomicrobium roseum (strain ATCC 27502 / DSM 5159 / P-2), this protein is Type III pantothenate kinase.